The sequence spans 205 residues: Holliday junction branch migration complex subunit RuvA (205 aa).

The domain I stretch occupies residues 1–64; it reads MIGRLRGIVL…EDAQLLYGFN (64 aa). Residues 65-143 are domain II; sequence DKQERALFRE…GLNGDLFNQS (79 aa). The tract at residues 144–156 is flexible linker; it reads SDINLPATAKQTT. The tract at residues 157-205 is domain III; that stretch reads SDADSEAEAAAALVSLGYKPQEASRMVSKIAKPGADCETLIREALRAVL.

The protein belongs to the RuvA family. Homotetramer. Forms an RuvA(8)-RuvB(12)-Holliday junction (HJ) complex. HJ DNA is sandwiched between 2 RuvA tetramers; dsDNA enters through RuvA and exits via RuvB. An RuvB hexamer assembles on each DNA strand where it exits the tetramer. Each RuvB hexamer is contacted by two RuvA subunits (via domain III) on 2 adjacent RuvB subunits; this complex drives branch migration. In the full resolvosome a probable DNA-RuvA(4)-RuvB(12)-RuvC(2) complex forms which resolves the HJ.

The protein resides in the cytoplasm. Its function is as follows. The RuvA-RuvB-RuvC complex processes Holliday junction (HJ) DNA during genetic recombination and DNA repair, while the RuvA-RuvB complex plays an important role in the rescue of blocked DNA replication forks via replication fork reversal (RFR). RuvA specifically binds to HJ cruciform DNA, conferring on it an open structure. The RuvB hexamer acts as an ATP-dependent pump, pulling dsDNA into and through the RuvAB complex. HJ branch migration allows RuvC to scan DNA until it finds its consensus sequence, where it cleaves and resolves the cruciform DNA. The protein is Holliday junction branch migration complex subunit RuvA of Photorhabdus laumondii subsp. laumondii (strain DSM 15139 / CIP 105565 / TT01) (Photorhabdus luminescens subsp. laumondii).